Reading from the N-terminus, the 342-residue chain is S-adenosylmethionine:tRNA ribosyltransferase-isomerase (342 aa).

Belongs to the QueA family. As to quaternary structure, monomer.

Its subcellular location is the cytoplasm. It catalyses the reaction 7-aminomethyl-7-carbaguanosine(34) in tRNA + S-adenosyl-L-methionine = epoxyqueuosine(34) in tRNA + adenine + L-methionine + 2 H(+). Its pathway is tRNA modification; tRNA-queuosine biosynthesis. In terms of biological role, transfers and isomerizes the ribose moiety from AdoMet to the 7-aminomethyl group of 7-deazaguanine (preQ1-tRNA) to give epoxyqueuosine (oQ-tRNA). In Bacillus licheniformis (strain ATCC 14580 / DSM 13 / JCM 2505 / CCUG 7422 / NBRC 12200 / NCIMB 9375 / NCTC 10341 / NRRL NRS-1264 / Gibson 46), this protein is S-adenosylmethionine:tRNA ribosyltransferase-isomerase.